The following is a 446-amino-acid chain: Probable D-serine dehydratase (446 aa).

Position 116 is an N6-(pyridoxal phosphate)lysine (Lys-116).

Belongs to the serine/threonine dehydratase family. DsdA subfamily. It depends on pyridoxal 5'-phosphate as a cofactor.

The enzyme catalyses D-serine = pyruvate + NH4(+). This Bacillus anthracis (strain CDC 684 / NRRL 3495) protein is Probable D-serine dehydratase.